Consider the following 93-residue polypeptide: Small ribosomal subunit protein uS19 (93 aa).

It belongs to the universal ribosomal protein uS19 family.

In terms of biological role, protein S19 forms a complex with S13 that binds strongly to the 16S ribosomal RNA. The sequence is that of Small ribosomal subunit protein uS19 from Phytoplasma australiense.